A 167-amino-acid chain; its full sequence is Insertion element IS1 1 protein InsB (167 aa).

This sequence belongs to the transposase 27 family.

Its function is as follows. Absolutely required for transposition of IS1. The sequence is that of Insertion element IS1 1 protein InsB (insB1) from Escherichia coli (strain K12).